Reading from the N-terminus, the 285-residue chain is MKLCGFEVGLNQPLFLIAGPCVIESEQLQMDTAGTLKEITASLGIAFIFKSSFDKANRSSGSTFRGPGIERGLEILAKVKRELGVPILTDIHSEDQIAQVASVVDVLQTPAFLCRQTDFIRAVAQSGLPVNIKKGQFLAPGDMKNVIDKARAAAREKGLNEDNFMACERGVSFGYNNLVSDMRSLAIMRDTGAPVVFDATHSVQLPGGQGTSSGGQREMVPVLARAAVAVGVAGLFMETHPDPSKALSDGPNAVPLKHMRALLETLVALDAVTKKNGFLENSFAA.

It belongs to the KdsA family.

It localises to the cytoplasm. The catalysed reaction is D-arabinose 5-phosphate + phosphoenolpyruvate + H2O = 3-deoxy-alpha-D-manno-2-octulosonate-8-phosphate + phosphate. The protein operates within carbohydrate biosynthesis; 3-deoxy-D-manno-octulosonate biosynthesis; 3-deoxy-D-manno-octulosonate from D-ribulose 5-phosphate: step 2/3. Its pathway is bacterial outer membrane biogenesis; lipopolysaccharide biosynthesis. In Albidiferax ferrireducens (strain ATCC BAA-621 / DSM 15236 / T118) (Rhodoferax ferrireducens), this protein is 2-dehydro-3-deoxyphosphooctonate aldolase.